A 36-amino-acid polypeptide reads, in one-letter code: MKIIKLITIFTMMATLMXXVANGEPIPPNAVKSLQG.

A signal peptide spans 1-23 (MKIIKLITIFTMMATLMXXVANG). A propeptide spanning residues 24–25 (EP) is cleaved from the precursor. At Q35 the chain carries Glutamine amide.

In terms of tissue distribution, expressed by the venom gland.

It localises to the secreted. Its function is as follows. Venom protein with unknown function. Does not induce paralysis when a high dose is administered by intrathoracic injection into the blowfly Lucilia caesar. This Tetramorium bicarinatum (Tramp ant) protein is U14-myrmicitoxin-Tb1a.